A 940-amino-acid polypeptide reads, in one-letter code: Valine--tRNA ligase (940 aa).

The short motif at 47-57 (PNVTGILHMGH) is the 'HIGH' region element. Positions 564–568 (KLSKS) match the 'KMSKS' region motif. Residue K567 participates in ATP binding. The stretch at 872 to 938 (PIEQITKEKN…LQSILDKLAS (67 aa)) forms a coiled coil.

The protein belongs to the class-I aminoacyl-tRNA synthetase family. ValS type 1 subfamily. Monomer.

It is found in the cytoplasm. The enzyme catalyses tRNA(Val) + L-valine + ATP = L-valyl-tRNA(Val) + AMP + diphosphate. In terms of biological role, catalyzes the attachment of valine to tRNA(Val). As ValRS can inadvertently accommodate and process structurally similar amino acids such as threonine, to avoid such errors, it has a 'posttransfer' editing activity that hydrolyzes mischarged Thr-tRNA(Val) in a tRNA-dependent manner. The chain is Valine--tRNA ligase from Chlamydia felis (strain Fe/C-56) (Chlamydophila felis).